Here is a 135-residue protein sequence, read N- to C-terminus: Large ribosomal subunit protein uL16c (135 aa).

Belongs to the universal ribosomal protein uL16 family. In terms of assembly, part of the 50S ribosomal subunit.

It localises to the plastid. It is found in the chloroplast. This chain is Large ribosomal subunit protein uL16c, found in Euglena gracilis.